A 713-amino-acid polypeptide reads, in one-letter code: Histone-lysine N-methyltransferase SETDB2 (713 aa).

The tract at residues Pro-78–Asn-109 is disordered. Positions His-87–Asn-109 are enriched in polar residues. The 73-residue stretch at Leu-161–Gln-233 folds into the MBD domain. A Pre-SET domain is found at Asp-294–Gly-367. Zn(2+) contacts are provided by Cys-296, Cys-298, Cys-302, Cys-308, Cys-310, Cys-348, Cys-352, Cys-354, and Cys-359. In terms of domain architecture, SET spans Val-370–Gly-688. Residue Lys-380 to Trp-382 participates in S-adenosyl-L-methionine binding. 2 stretches are compositionally biased toward basic and acidic residues: residues Glu-511–Leu-534 and Thr-579–Glu-592. Disordered stretches follow at residues Glu-511–Glu-549 and Thr-579–Glu-608. S-adenosyl-L-methionine-binding positions include Arg-642 and Asn-645 to His-646. Positions 648, 701, 703, and 708 each coordinate Zn(2+).

Belongs to the class V-like SAM-binding methyltransferase superfamily.

Its subcellular location is the nucleus. It localises to the chromosome. The enzyme catalyses N(6),N(6)-dimethyl-L-lysyl(9)-[histone H3] + S-adenosyl-L-methionine = N(6),N(6),N(6)-trimethyl-L-lysyl(9)-[histone H3] + S-adenosyl-L-homocysteine + H(+). Functionally, histone methyltransferase involved in left-right axis specification in early development and mitosis. Specifically trimethylates 'Lys-9' of histone H3 (H3K9me3). H3K9me3 is a specific tag for epigenetic transcriptional repression that recruits HP1 (CBX1, CBX3 and/or CBX5) proteins to methylated histones. Contributes to H3K9me3 in both the interspersed repetitive elements and centromere-associated repeats. Plays a role in chromosome condensation and segregation during mitosis. The protein is Histone-lysine N-methyltransferase SETDB2 (Setdb2) of Mus musculus (Mouse).